Reading from the N-terminus, the 385-residue chain is Proteinase-activated receptor 4 (385 aa).

Positions 1–17 are cleaved as a signal peptide; that stretch reads MWGRLLLWPLVLGFSLS. Positions 18-47 are cleaved as a propeptide — removed for receptor activation; sequence GGTQTPSVYDESGSTGGGDDSTPSILPAPR. The disordered stretch occupies residues 21-42; it reads QTPSVYDESGSTGGGDDSTPSI. Residues 48-82 are Extracellular-facing; that stretch reads GYPGQVCANDSDTLELPDSSRALLLGWVPTRLVPA. N-linked (GlcNAc...) asparagine glycosylation is present at Asn-56. A helical membrane pass occupies residues 83 to 103; sequence LYGLVLVVGLPANGLALWVLA. Topologically, residues 104–108 are cytoplasmic; the sequence is TQAPR. Residues 109–129 traverse the membrane as a helical segment; it reads LPSTMLLMNLAAADLLLALAL. At 130-151 the chain is on the extracellular side; it reads PPRIAYHLRGQRWPFGEAACRL. An intrachain disulfide couples Cys-149 to Cys-228. Residues 152-172 traverse the membrane as a helical segment; that stretch reads ATAALYGHMYGSVLLLAAVSL. Residues 173–192 lie on the Cytoplasmic side of the membrane; that stretch reads DRYLALVHPLRARALRGRRL. The helical transmembrane segment at 193-213 threads the bilayer; the sequence is ALGLCMAAWLMAAALALPLTL. Residues 214-247 lie on the Extracellular side of the membrane; sequence QRQTFRLARSDRVLCHDALPLDAQASHWQPAFTC. The helical transmembrane segment at 248–268 threads the bilayer; it reads LALLGCFLPLLAMLLCYGATL. Topologically, residues 269 to 283 are cytoplasmic; that stretch reads HTLAASGRRYGHALR. A helical transmembrane segment spans residues 284–304; that stretch reads LTAVVLASAVAFFVPSNLLLL. Topologically, residues 305–319 are extracellular; it reads LHYSDPSPSAWGNLY. A helical membrane pass occupies residues 320-343; it reads GAYVPSLALSTLNSCVDPFIYYYV. The Cytoplasmic portion of the chain corresponds to 344-385; that stretch reads SAEFRDKVRAGLFQRSPGDTVASKASAEGGSRGMGTHSSLLQ. Residues 362 to 385 are disordered; that stretch reads DTVASKASAEGGSRGMGTHSSLLQ.

The protein belongs to the G-protein coupled receptor 1 family. A proteolytic cleavage generates a new N-terminus that functions as a tethered ligand. Widely expressed, with highest levels in lung, pancreas, thyroid, testis and small intestine. Not expressed in brain, kidney, spinal cord and peripheral blood leukocytes. Also detected in platelets.

The protein localises to the cell membrane. Its activity is regulated as follows. Activated upon interaction by mucunain, a cowhage (Mucuna pruriens) plant cysteine proteinase. In terms of biological role, receptor for activated thrombin or trypsin coupled to G proteins that stimulate phosphoinositide hydrolysis. May play a role in platelets activation. In Homo sapiens (Human), this protein is Proteinase-activated receptor 4 (F2RL3).